Here is a 410-residue protein sequence, read N- to C-terminus: Cysteine desulfurase IscS (410 aa).

Pyridoxal 5'-phosphate contacts are provided by residues alanine 80–threonine 81, asparagine 160, glutamine 188, and serine 208–histidine 210. Residue lysine 211 is modified to N6-(pyridoxal phosphate)lysine. Pyridoxal 5'-phosphate is bound at residue threonine 248. Residue cysteine 334 is the Cysteine persulfide intermediate of the active site. Cysteine 334 serves as a coordination point for [2Fe-2S] cluster.

It belongs to the class-V pyridoxal-phosphate-dependent aminotransferase family. NifS/IscS subfamily. As to quaternary structure, homodimer. Forms a heterotetramer with IscU, interacts with other sulfur acceptors. Pyridoxal 5'-phosphate serves as cofactor.

It localises to the cytoplasm. The enzyme catalyses (sulfur carrier)-H + L-cysteine = (sulfur carrier)-SH + L-alanine. The protein operates within cofactor biosynthesis; iron-sulfur cluster biosynthesis. In terms of biological role, master enzyme that delivers sulfur to a number of partners involved in Fe-S cluster assembly, tRNA modification or cofactor biosynthesis. Catalyzes the removal of elemental sulfur atoms from cysteine to produce alanine. Functions as a sulfur delivery protein for Fe-S cluster synthesis onto IscU, an Fe-S scaffold assembly protein, as well as other S acceptor proteins. The chain is Cysteine desulfurase IscS from Rickettsia peacockii (strain Rustic).